The sequence spans 124 residues: Large ribosomal subunit protein uL14 (124 aa).

Belongs to the universal ribosomal protein uL14 family. Part of the 50S ribosomal subunit. Forms a cluster with proteins L3 and L19. In the 70S ribosome, L14 and L19 interact and together make contacts with the 16S rRNA in bridges B5 and B8.

Binds to 23S rRNA. Forms part of two intersubunit bridges in the 70S ribosome. This chain is Large ribosomal subunit protein uL14, found in Mycoplasmoides gallisepticum (strain R(low / passage 15 / clone 2)) (Mycoplasma gallisepticum).